Consider the following 530-residue polypeptide: Ubiquitin carboxyl-terminal hydrolase 17-like protein 10 (530 aa).

Positions 80-375 constitute a USP domain; that stretch reads AGLQNMGNTC…QAYVLFYIQK (296 aa). Cysteine 89 acts as the Nucleophile in catalysis. The active-site Proton acceptor is the histidine 334. Basic and acidic residues-rich tracts occupy residues 382–392 and 398–410; these read SESVSRGREPR and DTDR…ELKR. Disordered stretches follow at residues 382-410 and 477-530; these read SESV…ELKR and NHHP…LVCQ. Residues 484–495 show a composition bias toward low complexity; that stretch reads SSLLNLSSTTPT. The segment covering 496–505 has biased composition (polar residues); it reads DQESMNTGTL. Over residues 510-524 the composition is skewed to basic residues; that stretch reads GRTRRSKGKNKHSKR.

It belongs to the peptidase C19 family. USP17 subfamily.

It is found in the nucleus. Its subcellular location is the endoplasmic reticulum. The catalysed reaction is Thiol-dependent hydrolysis of ester, thioester, amide, peptide and isopeptide bonds formed by the C-terminal Gly of ubiquitin (a 76-residue protein attached to proteins as an intracellular targeting signal).. Its function is as follows. Deubiquitinating enzyme that removes conjugated ubiquitin from specific proteins to regulate different cellular processes that may include cell proliferation, progression through the cell cycle, apoptosis, cell migration, and the cellular response to viral infection. The chain is Ubiquitin carboxyl-terminal hydrolase 17-like protein 10 (USP17L10) from Homo sapiens (Human).